We begin with the raw amino-acid sequence, 319 residues long: Ferrochelatase (319 aa).

H194 and E275 together coordinate Fe cation.

It belongs to the ferrochelatase family.

Its subcellular location is the cytoplasm. The catalysed reaction is heme b + 2 H(+) = protoporphyrin IX + Fe(2+). It participates in porphyrin-containing compound metabolism; protoheme biosynthesis; protoheme from protoporphyrin-IX: step 1/1. Catalyzes the ferrous insertion into protoporphyrin IX. The sequence is that of Ferrochelatase from Hamiltonella defensa subsp. Acyrthosiphon pisum (strain 5AT).